A 233-amino-acid polypeptide reads, in one-letter code: Lactate utilization protein C (233 aa).

Belongs to the LutC/YkgG family.

Its function is as follows. Is involved in L-lactate degradation and allows cells to grow with lactate as the sole carbon source. This Oceanobacillus iheyensis (strain DSM 14371 / CIP 107618 / JCM 11309 / KCTC 3954 / HTE831) protein is Lactate utilization protein C.